The chain runs to 371 residues: 3-dehydroquinate synthase (371 aa).

NAD(+)-binding positions include 114–118 (GVVGD), 138–139 (TT), K151, K160, and 178–181 (TLNT). E193, H258, and H275 together coordinate Zn(2+).

This sequence belongs to the sugar phosphate cyclases superfamily. Dehydroquinate synthase family. The cofactor is Co(2+). It depends on Zn(2+) as a cofactor. NAD(+) is required as a cofactor.

The protein localises to the cytoplasm. It catalyses the reaction 7-phospho-2-dehydro-3-deoxy-D-arabino-heptonate = 3-dehydroquinate + phosphate. Its pathway is metabolic intermediate biosynthesis; chorismate biosynthesis; chorismate from D-erythrose 4-phosphate and phosphoenolpyruvate: step 2/7. Its function is as follows. Catalyzes the conversion of 3-deoxy-D-arabino-heptulosonate 7-phosphate (DAHP) to dehydroquinate (DHQ). The protein is 3-dehydroquinate synthase of Synechococcus sp. (strain CC9605).